Reading from the N-terminus, the 282-residue chain is Pantothenate synthetase (282 aa).

Residue 30–37 coordinates ATP; the sequence is MGYFHEGH. The Proton donor role is filled by H37. Position 61 (Q61) interacts with (R)-pantoate. Q61 is a binding site for beta-alanine. An ATP-binding site is contributed by 147 to 150; sequence GQKD. Position 153 (Q153) interacts with (R)-pantoate. Residues V176 and 184 to 187 each bind ATP; that span reads LSSR.

This sequence belongs to the pantothenate synthetase family. Homodimer.

The protein localises to the cytoplasm. The catalysed reaction is (R)-pantoate + beta-alanine + ATP = (R)-pantothenate + AMP + diphosphate + H(+). It functions in the pathway cofactor biosynthesis; (R)-pantothenate biosynthesis; (R)-pantothenate from (R)-pantoate and beta-alanine: step 1/1. Its function is as follows. Catalyzes the condensation of pantoate with beta-alanine in an ATP-dependent reaction via a pantoyl-adenylate intermediate. This is Pantothenate synthetase from Maridesulfovibrio salexigens (strain ATCC 14822 / DSM 2638 / NCIMB 8403 / VKM B-1763) (Desulfovibrio salexigens).